A 315-amino-acid polypeptide reads, in one-letter code: Solute carrier family 25 member 32 (315 aa).

Solcar repeat units lie at residues 20 to 109 (HVRY…IKSY), 118 to 209 (LEAT…LKLK), and 222 to 306 (LSTV…VSHF). The next 6 helical transmembrane spans lie at 26-43 (LIAG…LHPL), 89-106 (IWGA…YNAI), 123-143 (YLVS…PLWV), 186-203 (FVPG…FMAY), 227-243 (YISV…AATY), and 281-300 (GIAP…FVVY).

It belongs to the mitochondrial carrier (TC 2.A.29) family. Ubiquitous.

Its subcellular location is the mitochondrion inner membrane. It carries out the reaction FAD(in) = FAD(out). In terms of biological role, facilitates flavin adenine dinucleotide (FAD) translocation across the mitochondrial inner membrane into the mitochondrial matrix where it acts as a redox cofactor to assist flavoenzyme activities in fundamental metabolic processes including fatty acid beta-oxidation, amino acid and choline metabolism as well as mitochondrial electron transportation. In particular, provides FAD to DLD dehydrogenase of the glycine cleavage system, part of mitochondrial one-carbon metabolic pathway involved in neural tube closure in early embryogenesis. The polypeptide is Solute carrier family 25 member 32 (Homo sapiens (Human)).